We begin with the raw amino-acid sequence, 944 residues long: ATP-dependent helicase fft1 (944 aa).

Disordered stretches follow at residues 89-109 and 174-246; these read AAYD…ESSN and SAQK…NSIP. Residues 92 to 108 are compositionally biased toward basic and acidic residues; it reads DPHDQPPERDVSLKESS. The span at 174 to 184 shows a compositional bias: polar residues; sequence SAQKLNNQPIE. Residues 186–203 show a composition bias toward basic and acidic residues; sequence SSVDKENAKRKRYVEEGT. A compositionally biased stretch (acidic residues) spans 217–227; the sequence is LSDEETNEDDL. Polar residues predominate over residues 230-246; the sequence is QSPTACTTDANIDNSIP. A Helicase ATP-binding domain is found at 426–592; sequence CLMYKAKLSG…ISLLAFMLPK (167 aa). 439 to 446 contributes to the ATP binding site; sequence DEMGLGKT. The short motif at 543–546 is the DEGH box element; sequence DEGH. A Helicase C-terminal domain is found at 766 to 923; that stretch reads KVKKLCSLLK…DSEKIQKEIS (158 aa).

Belongs to the SNF2/RAD54 helicase family.

Its subcellular location is the nucleus. It catalyses the reaction ATP + H2O = ADP + phosphate + H(+). In terms of biological role, DNA helicase that possesses intrinsic ATP-dependent nucleosome-remodeling activity and is required for heterochromatin organization. The protein is ATP-dependent helicase fft1 (fft1) of Schizosaccharomyces pombe (strain 972 / ATCC 24843) (Fission yeast).